The sequence spans 317 residues: Protein phosphatase PTC7 homolog fig (317 aa).

One can recognise a PPM-type phosphatase domain in the interval 46-312 (PYLVTVVQGR…DDITLILASV (267 aa)). 3 residues coordinate Mn(2+): Asp90, Gly91, and Asp235.

Belongs to the PP2C family. It depends on Mg(2+) as a cofactor. Requires Mn(2+) as cofactor.

The enzyme catalyses O-phospho-L-seryl-[protein] + H2O = L-seryl-[protein] + phosphate. It catalyses the reaction O-phospho-L-threonyl-[protein] + H2O = L-threonyl-[protein] + phosphate. This Drosophila erecta (Fruit fly) protein is Protein phosphatase PTC7 homolog fig.